Consider the following 20-residue polypeptide: Large ribosomal subunit protein uL5 (20 aa).

This sequence belongs to the universal ribosomal protein uL5 family. In terms of assembly, part of the 50S ribosomal subunit; part of the 5S rRNA/L5/L18/L25 subcomplex. Contacts the 5S rRNA and the P site tRNA. Forms a bridge to the 30S subunit in the 70S ribosome.

In terms of biological role, this is one of the proteins that bind and probably mediate the attachment of the 5S RNA into the large ribosomal subunit, where it forms part of the central protuberance. In the 70S ribosome it contacts protein S13 of the 30S subunit (bridge B1b), connecting the two subunits; this bridge is implicated in subunit movement. Contacts the P site tRNA; the 5S rRNA and some of its associated proteins might help stabilize positioning of ribosome-bound tRNAs. The polypeptide is Large ribosomal subunit protein uL5 (rplE) (Bacillus cereus).